We begin with the raw amino-acid sequence, 88 residues long: Apolipoprotein C-I (88 aa).

A signal peptide spans 1–26 (MRLFIALPVLIVVVAMTLEGPAPAQA).

The protein belongs to the apolipoprotein C1 family. Adult and fetal liver.

The protein localises to the secreted. Its function is as follows. Inhibitor of lipoprotein binding to the low density lipoprotein (LDL) receptor, LDL receptor-related protein, and very low density lipoprotein (VLDL) receptor. Associates with high density lipoproteins (HDL) and the triacylglycerol-rich lipoproteins in the plasma and makes up about 10% of the protein of the VLDL and 2% of that of HDL. Appears to interfere directly with fatty acid uptake and is also the major plasma inhibitor of cholesteryl ester transfer protein (CETP). Modulates the interaction of APOE with beta-migrating VLDL and inhibits binding of beta-VLDL to the LDL receptor-related protein. Binds free fatty acids and reduces their intracellular esterification. This Mus musculus (Mouse) protein is Apolipoprotein C-I (Apoc1).